The following is a 140-amino-acid chain: Putative peptidyl-tRNA hydrolase PTRHD1 (140 aa).

This sequence belongs to the PTH2 family. PTRHD1 subfamily.

It catalyses the reaction an N-acyl-L-alpha-aminoacyl-tRNA + H2O = an N-acyl-L-amino acid + a tRNA + H(+). In terms of biological role, as a putative peptidyl-tRNA hydrolase, it might be involved in releasing tRNAs from the ribosome during protein synthesis. Some evidence, however, suggests that it lacks peptidyl-tRNA hydrolase activity. The protein is Putative peptidyl-tRNA hydrolase PTRHD1 (PTRHD1) of Homo sapiens (Human).